A 166-amino-acid polypeptide reads, in one-letter code: Antibacterial peptide PMAP-36 (166 aa).

A signal peptide spans 1–29 (METQRASLCLGRWSLWLLLLGLVVPSASA). Residues 30–129 (QALSYREAVL…LDINCDEIQS (100 aa)) constitute a propeptide that is removed on maturation. 2 cysteine pairs are disulfide-bonded: C85–C96 and C107–C124.

Belongs to the cathelicidin family.

Its subcellular location is the secreted. In terms of biological role, exerts antimicrobial activity against both Gram-positive and negative bacteria. Its activity appears to be mediated by its ability to damage bacterial membranes. This chain is Antibacterial peptide PMAP-36 (PMAP36), found in Sus scrofa (Pig).